The following is a 117-amino-acid chain: UPF0122 protein Cthe_0771 (117 aa).

It belongs to the UPF0122 family.

Its function is as follows. Might take part in the signal recognition particle (SRP) pathway. This is inferred from the conservation of its genetic proximity to ftsY/ffh. May be a regulatory protein. The polypeptide is UPF0122 protein Cthe_0771 (Acetivibrio thermocellus (strain ATCC 27405 / DSM 1237 / JCM 9322 / NBRC 103400 / NCIMB 10682 / NRRL B-4536 / VPI 7372) (Clostridium thermocellum)).